Here is a 108-residue protein sequence, read N- to C-terminus: Nucleoid-associated protein BamMC406_1737 (108 aa).

The segment covering 85–95 (ATSQEKMSGMT) has biased composition (polar residues). Residues 85 to 108 (ATSQEKMSGMTSGLPLPPGFKLPF) form a disordered region. Residues 99–108 (PLPPGFKLPF) show a composition bias toward pro residues.

Belongs to the YbaB/EbfC family. Homodimer.

Its subcellular location is the cytoplasm. The protein resides in the nucleoid. Its function is as follows. Binds to DNA and alters its conformation. May be involved in regulation of gene expression, nucleoid organization and DNA protection. This chain is Nucleoid-associated protein BamMC406_1737, found in Burkholderia ambifaria (strain MC40-6).